The primary structure comprises 294 residues: tRNA pseudouridine synthase B (294 aa).

Asp-39 functions as the Nucleophile in the catalytic mechanism.

This sequence belongs to the pseudouridine synthase TruB family. Type 1 subfamily.

The catalysed reaction is uridine(55) in tRNA = pseudouridine(55) in tRNA. Its function is as follows. Responsible for synthesis of pseudouridine from uracil-55 in the psi GC loop of transfer RNAs. This Streptococcus pyogenes serotype M2 (strain MGAS10270) protein is tRNA pseudouridine synthase B.